The primary structure comprises 362 residues: Lipoprotein p35 (362 aa).

The first 30 residues, Met1–Ser30, serve as a signal peptide directing secretion. Cys31 carries N-palmitoyl cysteine lipidation. Cys31 carries S-diacylglycerol cysteine lipidation. Positions Ser33–Gln53 are disordered.

The protein belongs to the p35 lipoprotein family. The N-terminus is blocked.

It is found in the cell membrane. In terms of biological role, major M.penetrans antigen. The sequence is that of Lipoprotein p35 from Malacoplasma penetrans (strain HF-2) (Mycoplasma penetrans).